The sequence spans 681 residues: tRNA wybutosine-synthesizing protein 4 (681 aa).

A compositionally biased stretch (basic residues) spans 1–11 (MSNKNQRKTKS). Residues 1-21 (MSNKNQRKTKSKDREVRKTND) are disordered. S-adenosyl-L-methionine-binding positions include Arg66, Gly92, Asp119, 165–166 (NL), and Glu193.

The protein belongs to the methyltransferase superfamily. LCMT family.

The catalysed reaction is 7-[(3S)-3-amino-3-carboxypropyl]wyosine(37) in tRNA(Phe) + S-adenosyl-L-methionine = 7-[(3S)-(3-amino-3-methoxycarbonyl)propyl]wyosine(37) in tRNA(Phe) + S-adenosyl-L-homocysteine. The enzyme catalyses 7-[(3S)-(3-amino-3-methoxycarbonyl)propyl]wyosine(37) in tRNA(Phe) + S-adenosyl-L-methionine + CO2 = wybutosine(37) in tRNA(Phe) + S-adenosyl-L-homocysteine + 2 H(+). Its pathway is tRNA modification; wybutosine-tRNA(Phe) biosynthesis. Probable S-adenosyl-L-methionine-dependent methyltransferase that acts as a component of the wybutosine biosynthesis pathway. Wybutosine is a hyper modified guanosine with a tricyclic base found at the 3'-position adjacent to the anticodon of eukaryotic phenylalanine tRNA. May methylate the carboxyl group of leucine residues to form alpha-leucine ester residues. This Schizosaccharomyces pombe (strain 972 / ATCC 24843) (Fission yeast) protein is tRNA wybutosine-synthesizing protein 4 (ppm2).